A 170-amino-acid polypeptide reads, in one-letter code: 3-hydroxyanthranilate 3,4-dioxygenase (170 aa).

Residue arginine 44 coordinates O2. Fe cation contacts are provided by histidine 48, glutamate 54, and histidine 92. Residue glutamate 54 participates in substrate binding. Substrate contacts are provided by arginine 96 and glutamate 106. Cysteine 121, cysteine 124, cysteine 158, and cysteine 161 together coordinate a divalent metal cation.

The protein belongs to the 3-HAO family. Fe(2+) is required as a cofactor.

It is found in the cytoplasm. The enzyme catalyses 3-hydroxyanthranilate + O2 = (2Z,4Z)-2-amino-3-carboxymuconate 6-semialdehyde. Its pathway is cofactor biosynthesis; NAD(+) biosynthesis; quinolinate from L-kynurenine: step 3/3. In terms of biological role, catalyzes the oxidative ring opening of 3-hydroxyanthranilate to 2-amino-3-carboxymuconate semialdehyde, which spontaneously cyclizes to quinolinate. The polypeptide is 3-hydroxyanthranilate 3,4-dioxygenase (Scheffersomyces stipitis (strain ATCC 58785 / CBS 6054 / NBRC 10063 / NRRL Y-11545) (Yeast)).